A 1024-amino-acid polypeptide reads, in one-letter code: Beta-galactosidase (1024 aa).

Substrate-binding residues include N103 and D202. Na(+) is bound at residue D202. Residues E417, H419, and E462 each coordinate Mg(2+). Residues E462 and 538–541 (EYAH) each bind substrate. Catalysis depends on E462, which acts as the Proton donor. The active-site Nucleophile is the E538. Mg(2+) is bound at residue N598. Residues F602 and N605 each contribute to the Na(+) site. N605 and W1000 together coordinate substrate.

Belongs to the glycosyl hydrolase 2 family. In terms of assembly, homotetramer. Requires Mg(2+) as cofactor. Na(+) serves as cofactor.

It carries out the reaction Hydrolysis of terminal non-reducing beta-D-galactose residues in beta-D-galactosides.. In Escherichia coli O17:K52:H18 (strain UMN026 / ExPEC), this protein is Beta-galactosidase.